A 384-amino-acid chain; its full sequence is Glucans biosynthesis protein C (384 aa).

The next 10 helical transmembrane spans lie at 17-37 (AWLM…THSW), 54-74 (FIHA…SYML), 91-111 (VGIP…ILLQ), 140-160 (LWFL…FTWF), 173-193 (AISL…YAAI), 212-232 (FIVM…LAFI), 240-260 (FTTP…AYLL), 274-294 (TESV…FSLG), 311-331 (ASLF…AYIT), and 338-358 (LIGF…LYEI).

This sequence belongs to the acyltransferase 3 family. OpgC subfamily.

The protein resides in the cell membrane. Its pathway is glycan metabolism; osmoregulated periplasmic glucan (OPG) biosynthesis. In terms of biological role, necessary for the succinyl substitution of periplasmic glucans. Could catalyze the transfer of succinyl residues from the cytoplasmic side of the membrane to the nascent glucan backbones on the periplasmic side of the membrane. This is Glucans biosynthesis protein C from Salmonella heidelberg (strain SL476).